The chain runs to 161 residues: Ribosome maturation factor RimP (161 aa).

The protein belongs to the RimP family.

Its subcellular location is the cytoplasm. Required for maturation of 30S ribosomal subunits. The sequence is that of Ribosome maturation factor RimP from Rickettsia felis (strain ATCC VR-1525 / URRWXCal2) (Rickettsia azadi).